Here is a 70-residue protein sequence, read N- to C-terminus: Small ribosomal subunit protein bS21 (70 aa).

It belongs to the bacterial ribosomal protein bS21 family.

In Campylobacter curvus (strain 525.92), this protein is Small ribosomal subunit protein bS21.